The following is a 115-amino-acid chain: NADH-ubiquinone oxidoreductase chain 3 (115 aa).

3 helical membrane passes run 3–23 (FVLALTINTLLALLLMILTFW), 55–75 (FFLVAITFLLFDLEIALLLPL), and 84–104 (LPLMTTSSLMLIIILALGLTY).

It belongs to the complex I subunit 3 family. In terms of assembly, core subunit of respiratory chain NADH dehydrogenase (Complex I) which is composed of 45 different subunits. Interacts with TMEM186. Interacts with TMEM242.

It is found in the mitochondrion inner membrane. The enzyme catalyses a ubiquinone + NADH + 5 H(+)(in) = a ubiquinol + NAD(+) + 4 H(+)(out). Its function is as follows. Core subunit of the mitochondrial membrane respiratory chain NADH dehydrogenase (Complex I) which catalyzes electron transfer from NADH through the respiratory chain, using ubiquinone as an electron acceptor. Essential for the catalytic activity of complex I. This Pongo pygmaeus (Bornean orangutan) protein is NADH-ubiquinone oxidoreductase chain 3.